Reading from the N-terminus, the 817-residue chain is TPR repeat-containing protein C19B12.01 (817 aa).

Disordered stretches follow at residues 276-298 and 386-413; these read DQKS…PNHP and GKSP…DGEN. 4 TPR repeats span residues 459–492, 521–554, 555–588, and 625–658; these read LQMW…DPYD, APAQ…NPLS, YPTW…NPED, and WRIW…KGKD.

This Schizosaccharomyces pombe (strain 972 / ATCC 24843) (Fission yeast) protein is TPR repeat-containing protein C19B12.01.